Here is a 113-residue protein sequence, read N- to C-terminus: Ribosome-associated factor Y (113 aa).

Residue Lys-66 is modified to N6-acetyllysine. The tract at residues Lys-91–Glu-113 is disordered.

This sequence belongs to the HPF/YfiA ribosome-associated protein family. YfiA subfamily. As to quaternary structure, associates mainly with 70S ribosomes.

In terms of biological role, during stationary phase, prevents 70S dimer formation, probably in order to regulate translation efficiency during transition between the exponential and the stationary phases. In addition, during environmental stress such as cold shock or excessive cell density at stationary phase, stabilizes the 70S ribosome against dissociation, inhibits translation initiation and increase translation accuracy. When normal growth conditions are restored, is quickly released from the ribosome. The protein is Ribosome-associated factor Y of Escherichia coli O157:H7.